A 104-amino-acid chain; its full sequence is MQSCITVIGERDVVLGFRLLGITNTIVAEGKDLVKKFMEEFENPHCSVIVVSEHLKNMIDKKTLRSIEVSSKPLVVFIPLPGFKEEESIETMAKRILGIDIGSV.

The protein belongs to the V-ATPase F subunit family. As to quaternary structure, has multiple subunits with at least A(3), B(3), C, D, E, F, H, I and proteolipid K(x).

Its subcellular location is the cell membrane. In terms of biological role, component of the A-type ATP synthase that produces ATP from ADP in the presence of a proton gradient across the membrane. The polypeptide is A-type ATP synthase subunit F (Thermoplasma volcanium (strain ATCC 51530 / DSM 4299 / JCM 9571 / NBRC 15438 / GSS1)).